A 960-amino-acid polypeptide reads, in one-letter code: Probable RNA-binding protein 19 (960 aa).

The RRM 1 domain occupies 2–79; it reads SRLIVKNLPN…SRITVEFCKS (78 aa). Disordered stretches follow at residues 85–119 and 149–294; these read KPRA…KKKK and WAND…TTCH. Serine 174, serine 176, and serine 180 each carry phosphoserine. A compositionally biased stretch (acidic residues) spans 176-194; the sequence is SGQESEEEGAGEDLEEEAS. A compositionally biased stretch (basic and acidic residues) spans 273 to 286; the sequence is RPPEARAETEKPAN. RRM domains are found at residues 294–369 and 402–480; these read HTVK…REKN and GRLF…PSTI. A Glycyl lysine isopeptide (Lys-Gly) (interchain with G-Cter in SUMO2) cross-link involves residue lysine 481. The segment at 491–513 is disordered; the sequence is LGSSSYKKKKEAQDKANSASSHN. The RRM 4 domain occupies 587–659; sequence TVILVKNLPA…VPLYLEWAPV (73 aa). Positions 667 to 729 are disordered; it reads PQKKKLQDTP…EEEEEESLPG (63 aa). Composition is skewed to acidic residues over residues 689 to 706 and 714 to 726; these read TVPD…EEGA and EEEE…EEES. RRM domains are found at residues 730-811 and 832-912; these read CTLF…ISER and SKIL…WADS. Residues serine 936, serine 949, and serine 951 each carry the phosphoserine modification.

This sequence belongs to the RRM MRD1 family. As to expression, expressed in the crypts of Lieberkuhn of the intestine and in intestinal neoplasia (at protein level).

It is found in the nucleus. Its subcellular location is the nucleolus. The protein localises to the nucleoplasm. The protein resides in the cytoplasm. It localises to the chromosome. Functionally, plays a role in embryo pre-implantation development. The polypeptide is Probable RNA-binding protein 19 (RBM19) (Homo sapiens (Human)).